Here is a 305-residue protein sequence, read N- to C-terminus: Oxidoreductase OpS7 (305 aa).

The protein belongs to the oxidoreductase OpS7 family.

Its pathway is secondary metabolite biosynthesis. In terms of biological role, oxidoreductase; part of the gene cluster that mediates the biosynthesis of the bibenzoquinone oosporein, a metabolite required for fungal virulence that acts by evading host immunity to facilitate fungal multiplication in insects. The non-reducing polyketide synthase OpS1 produces orsellinic acid by condensing acetyl-CoA with 3 malonyl-CoA units. Orsellinic acid is then hydroxylated to benzenetriol by the hydroxylase OpS4. The intermediate is oxidized either nonenzymatically to 5,5'-dideoxy-oosporein or enzymatically to benzenetetrol by the oxidoreductase OpS7. The latter is further dimerized to oosporein by the catalase OpS5. OpS6 probably functions en route for protecting cells against oxidative stress by scavenging any leaked free radical form of benzenetetrol by activating the thiol group of glutathione. In Beauveria bassiana (strain ARSEF 2860) (White muscardine disease fungus), this protein is Oxidoreductase OpS7.